Consider the following 623-residue polypeptide: Chaperone protein dnaK (623 aa).

The tract at residues 598–623 (TPDAGAEGGAAPSQDDAIETDFSTEK) is disordered.

Belongs to the heat shock protein 70 family.

The protein localises to the plastid. It localises to the chloroplast. Acts as a chaperone. The protein is Chaperone protein dnaK of Emiliania huxleyi (Coccolithophore).